We begin with the raw amino-acid sequence, 318 residues long: Protein RecA (318 aa).

An ATP-binding site is contributed by 53-60 (GPESSGKT).

The protein belongs to the RecA family.

Its subcellular location is the cytoplasm. Can catalyze the hydrolysis of ATP in the presence of single-stranded DNA, the ATP-dependent uptake of single-stranded DNA by duplex DNA, and the ATP-dependent hybridization of homologous single-stranded DNAs. It interacts with LexA causing its activation and leading to its autocatalytic cleavage. The sequence is that of Protein RecA from Bacteroides fragilis (strain YCH46).